Consider the following 378-residue polypeptide: Alcohol dehydrogenase 1 (378 aa).

Position 48 (Cys48) interacts with Zn(2+). NAD(+) is bound at residue 49–53; sequence HTDVL. Residues His69, Cys99, Cys102, Cys105, Cys113, and Cys177 each coordinate Zn(2+). NAD(+) is bound by residues 202–207, Asp226, Lys231, 274–276, 297–299, and 321–323; these read GIGTVG, TGV, IGA, and TAF.

The protein belongs to the zinc-containing alcohol dehydrogenase family. Class-IV subfamily. Homodimer. Zn(2+) is required as a cofactor. Present in non-glandular trichome cells.

It localises to the nucleus. The protein resides in the cytoplasm. It is found in the cytosol. It catalyses the reaction (+)-artemisinic alcohol + NAD(+) = (+)-artemisinic aldehyde + NADH + H(+). Its pathway is sesquiterpene biosynthesis. Its function is as follows. Involved in the biosynthesis of the antimalarial endoperoxide artemisinin. Catalyzes the conversion of artemisinic alcohol into artemisinic aldehyde. The polypeptide is Alcohol dehydrogenase 1 (Artemisia annua (Sweet wormwood)).